A 438-amino-acid polypeptide reads, in one-letter code: Thymidine phosphorylase (438 aa).

The protein belongs to the thymidine/pyrimidine-nucleoside phosphorylase family. In terms of assembly, homodimer.

The enzyme catalyses thymidine + phosphate = 2-deoxy-alpha-D-ribose 1-phosphate + thymine. It participates in pyrimidine metabolism; dTMP biosynthesis via salvage pathway; dTMP from thymine: step 1/2. In terms of biological role, the enzymes which catalyze the reversible phosphorolysis of pyrimidine nucleosides are involved in the degradation of these compounds and in their utilization as carbon and energy sources, or in the rescue of pyrimidine bases for nucleotide synthesis. This chain is Thymidine phosphorylase, found in Sinorhizobium fredii (strain NBRC 101917 / NGR234).